The chain runs to 556 residues: Pumilio homolog 11 (556 aa).

Positions 215–556 (GGSRELDGSA…RIFSKNLWKK (342 aa)) constitute a PUM-HD domain. Pumilio repeat units follow at residues 238 to 276 (SMVDSYGSVYLMAKDQLGCRLLQKFVDEGNFVDVMIIFK), 277 to 313 (EVINNVIELGTDPFGNYLIQKLIEVCNEEQRTQILIR), 316 to 351 (SKPGLLVKISINNYGTRVVQKLIETVTTKEQISLVK), 353 to 388 (ALVPGFLSLFRELNGNHVILNCLKFFSPNDNKFILE), 389 to 424 (AATKFCIEIATTRHGCCVLQRCVSYSVGEQHEKLVD), 425 to 459 (EISRNSLLLAQDPFGNYLVQYIIEKKVGGVNVLFE), 460 to 495 (LRGNYVKLATQKFGSHVVEKCLRYYPESRSQIVNEL), and 496 to 531 (VSVLNFGYLLQDPYANYVIQCALSKTKGFVRASLVE).

It is found in the cytoplasm. Its function is as follows. Sequence-specific RNA-binding protein that regulates translation and mRNA stability by binding the 3'-UTR of target mRNAs. In Arabidopsis thaliana (Mouse-ear cress), this protein is Pumilio homolog 11 (APUM11).